Here is a 152-residue protein sequence, read N- to C-terminus: Protein PLANT CADMIUM RESISTANCE 2 (152 aa).

Residues 57–79 form a helical membrane-spanning segment; that stretch reads TAGALYALIAVVTGCACIYSCFY.

Belongs to the cornifelin family. Homooligomer. In terms of tissue distribution, expressed in roots, leaves, shoots, stems, flowers and siliques. In leaves, restricted mainly to the vascular tissue. Expressed in all cells in the root tip, in the vascular tissue and the epidermis in the elongation zone, and only in the epidermal cells in the root hair zone.

Its subcellular location is the cell membrane. Zinc transporter acting in both zinc extrusion and long-distance zinc transport. Involved in the loading of zinc into the xyleme and in the detoxification of excess zinc at the epidermal cells. Acts independently from the zinc transporters HMA2 and HMA4. May be also involved in cadmium resistance. The chain is Protein PLANT CADMIUM RESISTANCE 2 (PCR2) from Arabidopsis thaliana (Mouse-ear cress).